A 438-amino-acid polypeptide reads, in one-letter code: Putative hydroxypyruvate reductase (438 aa).

It catalyses the reaction (R)-glycerate + NAD(+) = 3-hydroxypyruvate + NADH + H(+). The catalysed reaction is (R)-glycerate + NADP(+) = 3-hydroxypyruvate + NADPH + H(+). It participates in carbohydrate acid metabolism; tartrate degradation; 3-hydroxypyruvate from D-glycerate: step 1/1. Its function is as follows. Degrades an unidentified toxic product from the first step of tartrate degradation. In Agrobacterium vitis (Rhizobium vitis), this protein is Putative hydroxypyruvate reductase (ttuD).